The chain runs to 158 residues: 6,7-dimethyl-8-ribityllumazine synthase (158 aa).

5-amino-6-(D-ribitylamino)uracil-binding positions include F22, 56 to 58 (ALE), and 80 to 82 (VVI). 85–86 (ET) is a (2S)-2-hydroxy-3-oxobutyl phosphate binding site. Catalysis depends on H88, which acts as the Proton donor. N113 contributes to the 5-amino-6-(D-ribitylamino)uracil binding site. R127 serves as a coordination point for (2S)-2-hydroxy-3-oxobutyl phosphate.

This sequence belongs to the DMRL synthase family.

It catalyses the reaction (2S)-2-hydroxy-3-oxobutyl phosphate + 5-amino-6-(D-ribitylamino)uracil = 6,7-dimethyl-8-(1-D-ribityl)lumazine + phosphate + 2 H2O + H(+). The protein operates within cofactor biosynthesis; riboflavin biosynthesis; riboflavin from 2-hydroxy-3-oxobutyl phosphate and 5-amino-6-(D-ribitylamino)uracil: step 1/2. In terms of biological role, catalyzes the formation of 6,7-dimethyl-8-ribityllumazine by condensation of 5-amino-6-(D-ribitylamino)uracil with 3,4-dihydroxy-2-butanone 4-phosphate. This is the penultimate step in the biosynthesis of riboflavin. This is 6,7-dimethyl-8-ribityllumazine synthase from Neisseria gonorrhoeae (strain ATCC 700825 / FA 1090).